The sequence spans 239 residues: Gag polyprotein (239 aa).

The span at lysine 124–proline 141 shows a compositional bias: basic and acidic residues. Residues lysine 124–methionine 144 are disordered. A PPXY motif motif is present at residues proline 172 to tyrosine 175. A disordered region spans residues leucine 184–alanine 214.

The protein localises to the virion. The sequence is that of Gag polyprotein (ev-1) from Galliformes.